Reading from the N-terminus, the 205-residue chain is High frequency lysogenization protein HflD homolog (205 aa).

The protein belongs to the HflD family.

It is found in the cytoplasm. Its subcellular location is the cell inner membrane. This is High frequency lysogenization protein HflD homolog from Shewanella halifaxensis (strain HAW-EB4).